Consider the following 104-residue polypeptide: Membrane magnesium transporter (104 aa).

At 1–2 the chain is on the cytoplasmic side; the sequence is MN. A helical membrane pass occupies residues 3–23; the sequence is LGFLVGVFGVLILSHAAYSTI. Topologically, residues 24-40 are lumenal; the sequence is QYRGLLKIMEEEFSRPP. A helical membrane pass occupies residues 41–61; that stretch reads INVILELIIGLALCMWAALTF. Topologically, residues 62-104 are cytoplasmic; it reads PGKFLSIHPDSDENRAVFLPDNSDFMIFNHRGRLFPPQIDMKF.

The protein belongs to the membrane magnesium transporter (TC 1.A.67) family. As to quaternary structure, component of the ER membrane protein complex (EMC).

The protein resides in the endoplasmic reticulum membrane. Its subcellular location is the golgi apparatus membrane. It is found in the early endosome membrane. Mediates Mg(2+) transport. The chain is Membrane magnesium transporter from Arabidopsis thaliana (Mouse-ear cress).